A 741-amino-acid polypeptide reads, in one-letter code: Protein O-mannosyl-transferase TMTC4 (741 aa).

Residues 1 to 10 lie on the Cytoplasmic side of the membrane; the sequence is MVELDADLDH. The chain crosses the membrane as a helical span at residues 11–31; that stretch reads IVPSVLPPFWAKLVVGFVSLL. The Extracellular segment spans residues 32–110; it reads CFARSYDGDF…FHPVGFHVVN (79 aa). The N-linked (GlcNAc...) asparagine glycan is linked to Asn77. Residues 111–131 form a helical membrane-spanning segment; sequence ILLHGSISILMLDVFSVLFGG. At 132–146 the chain is on the cytoplasmic side; the sequence is LQYTGKGQRVHLAPR. 2 helical membrane-spanning segments follow: residues 147–166 and 167–185; these read ASLL…ECVA and GVVG…LSFL. At 186–198 the chain is on the cytoplasmic side; that stretch reads GYCQAFKETGNKE. Residues 199-219 traverse the membrane as a helical segment; it reads GTHSSTFWVLLSIFLGAVAML. At 220 to 224 the chain is on the extracellular side; it reads CKEQG. The helical transmembrane segment at 225 to 245 threads the bilayer; sequence ITVLGLNAVFDILVIGKLDIL. Residues 246 to 265 lie on the Cytoplasmic side of the membrane; it reads AAVRKVLHKDKSQENAGMFK. Residues 266–286 form a helical membrane-spanning segment; the sequence is NGGLLFRIALLTIGGTSMLYI. Residues 287 to 354 lie on the Extracellular side of the membrane; that stretch reads RWKIMGTGPP…PLIKSVGDWR (68 aa). Residues 355-375 traverse the membrane as a helical segment; it reads VIALAALWLCLIGLIFQALCS. The Cytoplasmic segment spans residues 376–382; that stretch reads EDSCKRR. Residues 383–403 traverse the membrane as a helical segment; that stretch reads ILTLGLGFLVIPFLPASNLFF. The Extracellular portion of the chain corresponds to 404–412; the sequence is RVGFVVAER. Residues 413–433 form a helical membrane-spanning segment; the sequence is VLYLPSAGYCVLLTFGFGALS. The Cytoplasmic segment spans residues 434–441; the sequence is RHTKKKKP. The chain crosses the membrane as a helical span at residues 442 to 462; that stretch reads VAAIILGILLINALRCVIRSG. Residues 463-741 are Extracellular-facing; that stretch reads EWRSEEQLFR…KLEQTQKKDV (279 aa). TPR repeat units lie at residues 482–515, 516–549, 550–583, 584–617, 618–651, 652–685, and 686–719; these read AKVH…NPKY, VHAM…QPDF, AAAW…RRKY, PDCY…KPEH, SLAW…IPND, HSLM…NPNV, and ASYH…DPVA. Asn497 carries an N-linked (GlcNAc...) asparagine glycan. An N-linked (GlcNAc...) asparagine glycan is attached at Asn609. An N-linked (GlcNAc...) asparagine glycan is attached at Asn725.

The protein belongs to the TMTC family.

It localises to the membrane. It is found in the endoplasmic reticulum. It carries out the reaction a di-trans,poly-cis-dolichyl beta-D-mannosyl phosphate + L-seryl-[protein] = 3-O-(alpha-D-mannosyl)-L-seryl-[protein] + a di-trans,poly-cis-dolichyl phosphate + H(+). The catalysed reaction is a di-trans,poly-cis-dolichyl beta-D-mannosyl phosphate + L-threonyl-[protein] = 3-O-(alpha-D-mannosyl)-L-threonyl-[protein] + a di-trans,poly-cis-dolichyl phosphate + H(+). It participates in protein modification; protein glycosylation. In terms of biological role, transfers mannosyl residues to the hydroxyl group of serine or threonine residues. The 4 members of the TMTC family are O-mannosyl-transferases dedicated primarily to the cadherin superfamily, each member seems to have a distinct role in decorating the cadherin domains with O-linked mannose glycans at specific regions. Also acts as O-mannosyl-transferase on other proteins such as PDIA3. The chain is Protein O-mannosyl-transferase TMTC4 from Mus musculus (Mouse).